A 526-amino-acid polypeptide reads, in one-letter code: Putative ankyrin repeat protein R840 (526 aa).

15 ANK repeats span residues 78 to 107 (TLNE…NIRS), 108 to 137 (RDNF…DIRS), 139 to 167 (KNYA…NIRD), 169 to 197 (DNCA…DSTS), 198 to 227 (NFNE…RCRN), 229 to 255 (SAII…NIRI), 256 to 285 (DDDY…NIRS), 286 to 315 (EIDH…DIKS), 317 to 345 (YDRS…NIRN), 346 to 375 (INDY…NIRV), 376 to 405 (DNDS…DIRV), 406 to 435 (NNYQ…NVSI), 437 to 467 (NVPL…DINL), 468 to 497 (ADDM…NVRA), and 499 to 526 (NDYA…AILS).

The sequence is that of Putative ankyrin repeat protein R840 from Acanthamoeba polyphaga (Amoeba).